Consider the following 145-residue polypeptide: Large ribosomal subunit protein bL17 (145 aa).

Belongs to the bacterial ribosomal protein bL17 family. In terms of assembly, part of the 50S ribosomal subunit. Contacts protein L32.

This chain is Large ribosomal subunit protein bL17, found in Orientia tsutsugamushi (strain Ikeda) (Rickettsia tsutsugamushi).